The following is an 86-amino-acid chain: Small ribosomal subunit protein uS17 (86 aa).

It belongs to the universal ribosomal protein uS17 family. Part of the 30S ribosomal subunit.

Its function is as follows. One of the primary rRNA binding proteins, it binds specifically to the 5'-end of 16S ribosomal RNA. In Exiguobacterium sp. (strain ATCC BAA-1283 / AT1b), this protein is Small ribosomal subunit protein uS17.